Here is a 1065-residue protein sequence, read N- to C-terminus: Pumilio domain-containing protein P35G2.14 (1065 aa).

Disordered regions lie at residues 1–78 (MHQD…SLRS), 130–265 (ITSK…PWSP), and 422–573 (TTGF…NTNS). Polar residues predominate over residues 16-44 (RNTISKPSNNNPPLDMSSLNNDFGQQLDS). Positions 59–77 (NPSSNFNDSNRSNISSSLR) are enriched in low complexity. Polar residues-rich tracts occupy residues 134 to 151 (LQNNSNLSVTSSANRGRT) and 169 to 189 (SSVSSGKQHLSSLSLHTHFNP). Composition is skewed to low complexity over residues 190–224 (SSSSTVSSDSLESSQQKAPSSSSTATPASAASEII) and 236–246 (SASNAANSGSN). Polar residues-rich tracts occupy residues 247-262 (TIRARQTTRTRSNTLP) and 434-455 (GLNTSLFNTSSGGSLKSPTFEV). Thr-260 is modified (phosphothreonine). Residues 470–483 (PLGSLSSRPKPSSS) are compositionally biased toward low complexity. Composition is skewed to polar residues over residues 495 to 522 (LKTSNPYMPSPSLLSGSLANSSEHSSSP) and 529 to 551 (IHNQPVSSSKSTASLNTNNNGLR). Residues Ser-506, Ser-511, and Ser-515 each carry the phosphoserine modification. At Thr-554 the chain carries Phosphothreonine. The segment covering 559–573 (NISTRSSSESNNTNS) has biased composition (low complexity). Residues 592 to 666 (HALWVGNLPS…DPVCISFAKV (75 aa)) form the RRM domain. The 354-residue stretch at 712–1065 (DLSKIYQILN…ELKKLAEVCA (354 aa)) folds into the PUM-HD domain. 6 Pumilio repeats span residues 771-808 (AINWLDEVSDLSSDHLGNTVVQKLFDYCSDPVKEMMLE), 809-844 (RIAPHLAQIGIHKNGTWAAQKIVDVASTEAQMRLIA), 846-884 (HLQPYIPLLFADQFGNYVVQTCLKFGAPMNDFVFEAILN), 886-917 (FWVIAQSRYGSRAVRACLESPDVTEEQRVLVA), 919-954 (AITVYSVHLAMNGNGTLLLTYLVENMNYPHIPILLT), and 956-993 (RFVQDIVRVCTHRLAYNSLLKIISISQGDTACGDLVVD).

Its subcellular location is the cytoplasm. In Schizosaccharomyces pombe (strain 972 / ATCC 24843) (Fission yeast), this protein is Pumilio domain-containing protein P35G2.14.